Here is an 876-residue protein sequence, read N- to C-terminus: MELASKYNPADVEGKWYQYWLDHKLFSSKPDGREPYTIVIPPPNVTGVLHMGHMLNNTIQDILVRRARMEGKNACWVPGTDHASIATEAKVVNKLAAQGIKKTDLSRDEFLKHAWAWTDEHGGIILKQLRKLGASCDWDRTAFTMDEKRSESVLKVFVDLYNKGLIYRGVRMVNWDPKALTALSDEEVIYKEEHGKLFYLRYKIEGEDGYAVVATTRPETIMGDTAMCINPNDPKNQHLKGKKVIVPLVGRVIPVIEDDYVDIEFGTGCLKVTPAHDVNDYMLGEKYNLPSIDIFNDNGTISEAAGMYIGMDRFDVRKQIEKDLEAAGLLEKTEAYTNKVGYSERTNVVIEPKLSMQWFLKMEHLAQIALEPVMKDDIKFYPAKYKNTYRHWMENIKDWCISRQLWWGHRIPAYFLPEGGYVVAVTDEEALKLAREKTGNPNLKMTDLRQDEDCLDTWFSSWLWPISLFDGINNPGNEEINYYYPTSDLVTGPDIIFFWVARMIMAGYEYEGKMPFKNVYFTGIVRDKLGRKMSKSLGNSPDPLELIEKYGADGVRMGMMLSAPAGNDILFDDALCEQGRNFCNKIWNAFRLVKGWENGMGTIDIPADAHLAVQWFDQRLDAAAVEVADLFSKYRLSEALMLIYKLFWDEFSSWLLEIVKPAYGQPVNGFIYSMTLSAFERLLAMLHPFMPFITEELWQQLREREPGASLMVQPLGEPGEVNEEFLQQFETAKEIISSVRTIRLQKNIALKEPLELQVVGANPVEKMNPVIRKMCNLSAIEVVDAKADGASSFMIGTTEFAVPLGNMIDVDAEIARMEAELKHKEGFLQGVLKKLSNEKFVNNAPAAVIEMERKKQADAESIIQSLKESIASLKNV.

Positions 43 to 53 (PNVTGVLHMGH) match the 'HIGH' region motif. The short motif at 532–536 (KMSKS) is the 'KMSKS' region element. K535 is an ATP binding site. Coiled-coil stretches lie at residues 805 to 826 (GNMI…HKEG) and 853 to 875 (RKKQ…SLKN).

This sequence belongs to the class-I aminoacyl-tRNA synthetase family. ValS type 1 subfamily. Monomer.

The protein resides in the cytoplasm. The catalysed reaction is tRNA(Val) + L-valine + ATP = L-valyl-tRNA(Val) + AMP + diphosphate. In terms of biological role, catalyzes the attachment of valine to tRNA(Val). As ValRS can inadvertently accommodate and process structurally similar amino acids such as threonine, to avoid such errors, it has a 'posttransfer' editing activity that hydrolyzes mischarged Thr-tRNA(Val) in a tRNA-dependent manner. The protein is Valine--tRNA ligase of Bacteroides fragilis (strain ATCC 25285 / DSM 2151 / CCUG 4856 / JCM 11019 / LMG 10263 / NCTC 9343 / Onslow / VPI 2553 / EN-2).